We begin with the raw amino-acid sequence, 495 residues long: Beta-galactoside alpha-2,6-sialyltransferase 2 (495 aa).

Residues methionine 1 to glutamine 10 lie on the Cytoplasmic side of the membrane. Residues glycine 11–threonine 31 form a helical; Signal-anchor for type II membrane protein membrane-spanning segment. At aspartate 32 to alanine 495 the chain is on the lumenal side. Disordered stretches follow at residues glycine 63–tryptophan 90 and glycine 107–glutamate 165. Positions proline 134–alanine 143 are enriched in low complexity. The segment covering proline 144 to arginine 153 has biased composition (basic residues). Cystine bridges form between cysteine 225-cysteine 491, cysteine 268-cysteine 420, and cysteine 438-cysteine 449. N-linked (GlcNAc...) asparagine glycosylation is found at asparagine 279 and asparagine 309.

It belongs to the glycosyltransferase 29 family.

The protein resides in the golgi apparatus. The protein localises to the golgi stack membrane. It catalyses the reaction a beta-D-galactoside + CMP-N-acetyl-beta-neuraminate = an N-acetyl-alpha-neuraminyl-(2-&gt;6)-beta-D-galactosyl derivative + CMP + H(+). In terms of biological role, transfers sialic acid from the donor of substrate CMP-sialic acid to galactose containing acceptor substrates. Has alpha-2,6-sialyltransferase activity toward oligosaccharides that have the Gal-beta-1,4-GlcNAc sequence at the non-reducing end of their carbohydrate groups, but it has weak or no activities toward glycoproteins and glycolipids. The polypeptide is Beta-galactoside alpha-2,6-sialyltransferase 2 (ST6GAL2) (Bos taurus (Bovine)).